The chain runs to 508 residues: MGLPWYRVHTVVLNDPGRLIAVHIMHTALVSGWAGSMALYELAVFDPSDPILDPMWRQGMFVIPFMTRLGITKSWGGWSITGETITNPGIWSYEGVAAVHIILSGLLFLAAIWHWVYWDLELFRDERTGKPALDLPKIFGIHLFLSGLLCFGFGAFHVTGLFGPGIWISDPYGITGKVQSVSPAWGAEGFDPFNPGGIASHHIAAGILGILAGLFHLSVRPPQRLYKALRMGNVETVLSSSIAAVFFAAFIVSGTMWYGSAATPIELFGPTRYQWDQGYFQQEIDRRVRLSTSQGFSISEAWSRIPEKLAFYDYIGNNPAKGGLFRAGPMDNGDGIAVGWLGHAVFKDKEGHELFVRRMPTFFETFPVVLVDEEGIIRADLPFRRAESKYSIEQVGVTVEFYGGELDNVSFSDPATVKKYARRAQLGEIFEFDRTTLKSDGVFRSSPRGWFTFGHLCFALLFFFGHIWHGARTLFRDVFAGIDPDIDSQIEFGIFQKLGDPTTKKQTV.

6 helical membrane passes run alanine 21–serine 36, isoleucine 101–tryptophan 115, glycine 140–phenylalanine 156, isoleucine 203–serine 218, valine 237–valine 252, and cysteine 457–arginine 472.

This sequence belongs to the PsbB/PsbC family. PsbB subfamily. PSII is composed of 1 copy each of membrane proteins PsbA, PsbB, PsbC, PsbD, PsbE, PsbF, PsbH, PsbI, PsbJ, PsbK, PsbL, PsbM, PsbT, PsbX, PsbY, PsbZ, Psb30/Ycf12, at least 3 peripheral proteins of the oxygen-evolving complex and a large number of cofactors. It forms dimeric complexes. Requires Binds multiple chlorophylls. PSII binds additional chlorophylls, carotenoids and specific lipids. as cofactor.

It localises to the plastid. Its subcellular location is the chloroplast thylakoid membrane. One of the components of the core complex of photosystem II (PSII). It binds chlorophyll and helps catalyze the primary light-induced photochemical processes of PSII. PSII is a light-driven water:plastoquinone oxidoreductase, using light energy to abstract electrons from H(2)O, generating O(2) and a proton gradient subsequently used for ATP formation. The polypeptide is Photosystem II CP47 reaction center protein (Chara vulgaris (Common stonewort)).